We begin with the raw amino-acid sequence, 265 residues long: Uroporphyrinogen-III synthase (265 aa).

This sequence belongs to the uroporphyrinogen-III synthase family. As to quaternary structure, monomer.

The protein resides in the cytoplasm. It is found in the cytosol. It catalyses the reaction hydroxymethylbilane = uroporphyrinogen III + H2O. It participates in porphyrin-containing compound metabolism; protoporphyrin-IX biosynthesis; coproporphyrinogen-III from 5-aminolevulinate: step 3/4. In terms of biological role, catalyzes cyclization of the linear tetrapyrrole, hydroxymethylbilane, to the macrocyclic uroporphyrinogen III, the branch point for the various sub-pathways leading to the wide diversity of porphyrins. Porphyrins act as cofactors for a multitude of enzymes that perform a variety of processes within the cell such as methionine synthesis (vitamin B12) or oxygen transport (heme). The polypeptide is Uroporphyrinogen-III synthase (Uros) (Mus musculus (Mouse)).